Consider the following 215-residue polypeptide: Large ribosomal subunit protein uL4c (215 aa).

The segment covering 48–57 (SQRQGTISTK) has biased composition (polar residues). A disordered region spans residues 48 to 85 (SQRQGTISTKTRSEVRGGGRKPWRQKGTGRARAGSSRS). Residues 65–76 (GGRKPWRQKGTG) are compositionally biased toward basic residues.

It belongs to the universal ribosomal protein uL4 family. In terms of assembly, part of the 50S ribosomal subunit.

Its subcellular location is the plastid. The protein resides in the chloroplast. Probably binds the 23S rRNA. This chain is Large ribosomal subunit protein uL4c (rpl4), found in Trieres chinensis (Marine centric diatom).